The sequence spans 336 residues: MAPKVGINGFGRIGRIVFRNAIEAGTVDVVAVNDPFIETHYAAYMLKYDSQHGQFKGTIETYDEGLIVNGKKIRFHTERDPANIPWGQDGAEYIVESTGVFTTQEKASAHLKGGAKKVVISAPSADAPMFVMGVNNETYKKDIQVLSNASCTTNCLAPLAKVINDNFGIIEGLMTTVHSYTATQKVVDGPSAKDWRGGRTAATNIIPSSTGAAKAVGKVIPSLNGKLTGMAMRVPTSNVSVVDLTVRTEKAVTYDQIKDAVKKASENELKGILGYTEDDIVSTDLNGDTRSSIFDAKAGIALNSNFIKLVSWYDNEWGYSRRVVDLITYISKVDAQ.

NAD(+) contacts are provided by residues 12-13 (RI), D34, and R79. D-glyceraldehyde 3-phosphate-binding positions include 150 to 152 (SCT), T181, 210 to 211 (TG), and R233. Residue C151 is the Nucleophile of the active site. Residue N315 coordinates NAD(+).

This sequence belongs to the glyceraldehyde-3-phosphate dehydrogenase family. Homotetramer.

It localises to the cytoplasm. The catalysed reaction is D-glyceraldehyde 3-phosphate + phosphate + NAD(+) = (2R)-3-phospho-glyceroyl phosphate + NADH + H(+). It participates in carbohydrate degradation; glycolysis; pyruvate from D-glyceraldehyde 3-phosphate: step 1/5. In terms of biological role, involved in osmoadaptation. The protein is Glyceraldehyde-3-phosphate dehydrogenase (gpdA) of Emericella nidulans (strain FGSC A4 / ATCC 38163 / CBS 112.46 / NRRL 194 / M139) (Aspergillus nidulans).